Consider the following 306-residue polypeptide: tRNA pseudouridine synthase B (306 aa).

Catalysis depends on D47, which acts as the Nucleophile.

This sequence belongs to the pseudouridine synthase TruB family. Type 1 subfamily.

It carries out the reaction uridine(55) in tRNA = pseudouridine(55) in tRNA. In terms of biological role, responsible for synthesis of pseudouridine from uracil-55 in the psi GC loop of transfer RNAs. This is tRNA pseudouridine synthase B from Neisseria gonorrhoeae (strain ATCC 700825 / FA 1090).